A 666-amino-acid chain; its full sequence is Protein-arginine deiminase type-4 (666 aa).

The Ca(2+) site is built by Asn153, Asp155, Asp165, Asp168, Asp176, and Asp179. A citrulline mark is found at Arg212 and Arg218. Gln349 lines the Ca(2+) pocket. Asp350 is an active-site residue. Positions 351, 353, 369, and 370 each coordinate Ca(2+). A citrulline mark is found at Arg372, Arg374, and Arg383. Arg374 contributes to the substrate binding site. Residues Phe407, Leu410, and Glu411 each contribute to the Ca(2+) site. Residues His471, Asp473, and Cys648 contribute to the active site.

Belongs to the protein arginine deiminase family. It depends on Ca(2+) as a cofactor. Autocitrullination at Arg-372 and Arg-374 inactivates the enzyme. In terms of tissue distribution, expressed in pluripotent embryonic stem and induced pluripotent stem cells but not multipotent neural stem cells.

The protein localises to the cytoplasm. It localises to the nucleus. The protein resides in the cytoplasmic granule. The catalysed reaction is L-arginyl-[protein] + H2O = L-citrullyl-[protein] + NH4(+). With respect to regulation, strongly Inhibited by F-amidine and N-alpha-benzoyl-N5-(2-chloro-1-iminoethyl)-L-ornithine amide (Cl-amidine). These inhibitors are however not specific to PADI4 and also inhibit other members of the family. Catalyzes the citrullination/deimination of arginine residues of proteins such as histones, thereby playing a key role in histone code and regulation of stem cell maintenance. Citrullinates histone H1 at 'Arg-54' (to form H1R54ci), histone H3 at 'Arg-2', 'Arg-8', 'Arg-17' and/or 'Arg-26' (to form H3R2ci, H3R8ci, H3R17ci, H3R26ci, respectively) and histone H4 at 'Arg-3' (to form H4R3ci). Acts as a key regulator of stem cell maintenance by mediating citrullination of histone H1: citrullination of 'Arg-54' of histone H1 (H1R54ci) results in H1 displacement from chromatin and global chromatin decondensation, thereby promoting pluripotency and stem cell maintenance. Promotes profound chromatin decondensation during the innate immune response to infection in neutrophils by mediating formation of H1R54ci. Required for the formation of neutrophil extracellular traps (NETs); NETs are mainly composed of DNA fibers and are released by neutrophils to bind pathogens during inflammation. Citrullination of histone H3 prevents their methylation by CARM1 and HRMT1L2/PRMT1 and represses transcription. Citrullinates EP300/P300 at 'Arg-2142', which favors its interaction with NCOA2/GRIP1. The sequence is that of Protein-arginine deiminase type-4 (Padi4) from Mus musculus (Mouse).